The chain runs to 163 residues: Acetolactate synthase isozyme 3 small subunit (163 aa).

Residues 4-78 (ILSVLLENES…DVLRVSELGQ (75 aa)) form the ACT domain.

Belongs to the acetolactate synthase small subunit family. Dimer of large and small chains.

It catalyses the reaction 2 pyruvate + H(+) = (2S)-2-acetolactate + CO2. The protein operates within amino-acid biosynthesis; L-isoleucine biosynthesis; L-isoleucine from 2-oxobutanoate: step 1/4. It participates in amino-acid biosynthesis; L-valine biosynthesis; L-valine from pyruvate: step 1/4. Sensitive to valine inhibition. This chain is Acetolactate synthase isozyme 3 small subunit (ilvH), found in Salmonella typhimurium (strain LT2 / SGSC1412 / ATCC 700720).